Reading from the N-terminus, the 134-residue chain is Small ribosomal subunit protein uS12 (134 aa).

The segment at 1–30 (MPTINQLVKHGREKVKEKSKSPALQGHPQK) is disordered. Asp89 is modified (3-methylthioaspartic acid). The interval 106–134 (GVENRRQSRSKYGAKRPKAGAAAGAKGKK) is disordered. Basic residues predominate over residues 112 to 123 (QSRSKYGAKRPK). Residues 124-134 (AGAAAGAKGKK) are compositionally biased toward low complexity.

This sequence belongs to the universal ribosomal protein uS12 family. Part of the 30S ribosomal subunit. Contacts proteins S8 and S17. May interact with IF1 in the 30S initiation complex.

Functionally, with S4 and S5 plays an important role in translational accuracy. Interacts with and stabilizes bases of the 16S rRNA that are involved in tRNA selection in the A site and with the mRNA backbone. Located at the interface of the 30S and 50S subunits, it traverses the body of the 30S subunit contacting proteins on the other side and probably holding the rRNA structure together. The combined cluster of proteins S8, S12 and S17 appears to hold together the shoulder and platform of the 30S subunit. This is Small ribosomal subunit protein uS12 from Fervidobacterium nodosum (strain ATCC 35602 / DSM 5306 / Rt17-B1).